Reading from the N-terminus, the 527-residue chain is GMP synthase [glutamine-hydrolyzing] (527 aa).

Positions 20 to 208 (SVVILDYGSQ…LFDVCGCAPT (189 aa)) constitute a Glutamine amidotransferase type-1 domain. The Nucleophile role is filled by C97. Active-site residues include H182 and E184. A GMPS ATP-PPase domain is found at 209-402 (WTAESFVEQA…LGLPEEIVQR (194 aa)). 236-242 (SGGVDSS) is an ATP binding site.

As to quaternary structure, homodimer.

The catalysed reaction is XMP + L-glutamine + ATP + H2O = GMP + L-glutamate + AMP + diphosphate + 2 H(+). Its pathway is purine metabolism; GMP biosynthesis; GMP from XMP (L-Gln route): step 1/1. Catalyzes the synthesis of GMP from XMP. This Thermomicrobium roseum (strain ATCC 27502 / DSM 5159 / P-2) protein is GMP synthase [glutamine-hydrolyzing].